A 663-amino-acid chain; its full sequence is DNA ligase (663 aa).

NAD(+) is bound by residues 33-37 (DYSYD), 82-83 (SI), and Glu-112. Lys-114 functions as the N6-AMP-lysine intermediate in the catalytic mechanism. NAD(+) is bound by residues Arg-135, Glu-171, Lys-285, and Lys-309. Cys-403, Cys-406, Cys-419, and Cys-424 together coordinate Zn(2+). The 83-residue stretch at 581-663 (DKEAPLQGKV…LRILDAKSVS (83 aa)) folds into the BRCT domain.

The protein belongs to the NAD-dependent DNA ligase family. LigA subfamily. The cofactor is Mg(2+). Requires Mn(2+) as cofactor.

The catalysed reaction is NAD(+) + (deoxyribonucleotide)n-3'-hydroxyl + 5'-phospho-(deoxyribonucleotide)m = (deoxyribonucleotide)n+m + AMP + beta-nicotinamide D-nucleotide.. Its function is as follows. DNA ligase that catalyzes the formation of phosphodiester linkages between 5'-phosphoryl and 3'-hydroxyl groups in double-stranded DNA using NAD as a coenzyme and as the energy source for the reaction. It is essential for DNA replication and repair of damaged DNA. In Chlamydia trachomatis serovar A (strain ATCC VR-571B / DSM 19440 / HAR-13), this protein is DNA ligase.